The chain runs to 182 residues: Large ribosomal subunit protein uL5 (182 aa).

It belongs to the universal ribosomal protein uL5 family. In terms of assembly, part of the 50S ribosomal subunit; part of the 5S rRNA/L5/L18/L25 subcomplex. Contacts the 5S rRNA and the P site tRNA. Forms a bridge to the 30S subunit in the 70S ribosome.

This is one of the proteins that bind and probably mediate the attachment of the 5S RNA into the large ribosomal subunit, where it forms part of the central protuberance. In the 70S ribosome it contacts protein S13 of the 30S subunit (bridge B1b), connecting the 2 subunits; this bridge is implicated in subunit movement. Contacts the P site tRNA; the 5S rRNA and some of its associated proteins might help stabilize positioning of ribosome-bound tRNAs. The chain is Large ribosomal subunit protein uL5 from Borrelia hermsii (strain HS1 / DAH).